We begin with the raw amino-acid sequence, 210 residues long: Peroxynitrite isomerase (210 aa).

Residues 21-27 carry the GXWXGXG motif; the sequence is GQWEGQG. Histidine 190 is a binding site for heme b.

It belongs to the nitrobindin family. In terms of assembly, homodimer. The cofactor is heme b.

The enzyme catalyses peroxynitrite = nitrate. Its pathway is nitrogen metabolism. Its function is as follows. Heme-binding protein able to scavenge peroxynitrite and to protect free L-tyrosine against peroxynitrite-mediated nitration, by acting as a peroxynitrite isomerase that converts peroxynitrite to nitrate. Therefore, this protein likely plays a role in peroxynitrite sensing and in the detoxification of reactive nitrogen and oxygen species (RNS and ROS, respectively). Is able to bind nitric oxide (NO) in vitro, but may act as a sensor of peroxynitrite levels in vivo. This is Peroxynitrite isomerase from Renibacterium salmoninarum (strain ATCC 33209 / DSM 20767 / JCM 11484 / NBRC 15589 / NCIMB 2235).